An 878-amino-acid polypeptide reads, in one-letter code: Aconitate hydratase A (878 aa).

Cys-426, Cys-492, and Cys-495 together coordinate [4Fe-4S] cluster.

Belongs to the aconitase/IPM isomerase family. In terms of assembly, monomer. The cofactor is [4Fe-4S] cluster.

The catalysed reaction is citrate = D-threo-isocitrate. It catalyses the reaction (2S,3R)-3-hydroxybutane-1,2,3-tricarboxylate = 2-methyl-cis-aconitate + H2O. It participates in carbohydrate metabolism; tricarboxylic acid cycle; isocitrate from oxaloacetate: step 2/2. It functions in the pathway organic acid metabolism; propanoate degradation. In terms of biological role, involved in the catabolism of short chain fatty acids (SCFA) via the tricarboxylic acid (TCA)(acetyl degradation route) and probably the 2-methylcitrate cycle I (propionate degradation route). Catalyzes the reversible isomerization of citrate to isocitrate via cis-aconitate. Could catalyze the hydration of 2-methyl-cis-aconitate to yield (2R,3S)-2-methylisocitrate. The apo form of AcnA functions as a RNA-binding regulatory protein. This is Aconitate hydratase A (acnA) from Rickettsia conorii (strain ATCC VR-613 / Malish 7).